The primary structure comprises 325 residues: Ribosomal RNA small subunit methyltransferase H (325 aa).

S-adenosyl-L-methionine-binding positions include 41–43 (GGH), Asp-60, Tyr-87, Asp-108, and Gln-115. The segment at 295–325 (DDDEKAANPRAAPVRLRAAERTRASEDRRGS) is disordered. The segment covering 311–325 (RAAERTRASEDRRGS) has biased composition (basic and acidic residues).

The protein belongs to the methyltransferase superfamily. RsmH family.

It is found in the cytoplasm. The catalysed reaction is cytidine(1402) in 16S rRNA + S-adenosyl-L-methionine = N(4)-methylcytidine(1402) in 16S rRNA + S-adenosyl-L-homocysteine + H(+). Its function is as follows. Specifically methylates the N4 position of cytidine in position 1402 (C1402) of 16S rRNA. The protein is Ribosomal RNA small subunit methyltransferase H of Leifsonia xyli subsp. xyli (strain CTCB07).